We begin with the raw amino-acid sequence, 637 residues long: Glutamate--cysteine ligase catalytic subunit (637 aa).

Methionine 1 carries the post-translational modification N-acetylmethionine. Phosphoserine occurs at positions 5 and 8.

It belongs to the glutamate--cysteine ligase type 3 family. Heterodimer of a catalytic heavy chain and a regulatory light chain.

The catalysed reaction is L-cysteine + L-glutamate + ATP = gamma-L-glutamyl-L-cysteine + ADP + phosphate + H(+). It carries out the reaction (2S)-2-aminobutanoate + L-glutamate + ATP = gamma-L-glutamyl-(2S)-2-aminobutanoate + ADP + phosphate + H(+). It functions in the pathway sulfur metabolism; glutathione biosynthesis; glutathione from L-cysteine and L-glutamate: step 1/2. With respect to regulation, feedback inhibition by glutathione. Catalyzes the ATP-dependent ligation of L-glutamate and L-cysteine and participates in the first and rate-limiting step in glutathione biosynthesis. The polypeptide is Glutamate--cysteine ligase catalytic subunit (Homo sapiens (Human)).